A 311-amino-acid polypeptide reads, in one-letter code: Probable manganese-dependent inorganic pyrophosphatase (311 aa).

Mn(2+)-binding residues include His-9, Asp-13, Asp-15, Asp-77, His-99, and Asp-151.

The protein belongs to the PPase class C family. The cofactor is Mn(2+).

The protein resides in the cytoplasm. The enzyme catalyses diphosphate + H2O = 2 phosphate + H(+). This chain is Probable manganese-dependent inorganic pyrophosphatase, found in Streptococcus equi subsp. equi (strain 4047).